We begin with the raw amino-acid sequence, 461 residues long: Juvenile hormone epoxide hydrolase (461 aa).

Residues 4-24 (LLFIALPLLVLASIPLYLLVL) form a helical membrane-spanning segment. D227 serves as the catalytic Nucleophile. The active-site Proton donor is the Y373. H430 (proton acceptor) is an active-site residue.

The protein belongs to the peptidase S33 family. Homodimer. In terms of tissue distribution, expressed in fat body, foregut and midgut but not in brain, subesophageal ganglia or silk gland of larvae on day 1 of fifth instar.

Its subcellular location is the microsome membrane. The protein resides in the endoplasmic reticulum membrane. The enzyme catalyses cis-stilbene oxide + H2O = (1R,2R)-hydrobenzoin. The catalysed reaction is 1-(4-methoxyphenyl)-N-methyl-N-[(3-methyloxetan-3-yl)methyl]methanamine + H2O = 2-{[(4-methoxybenzyl)(methyl)amino]methyl}-2-methylpropane-1,3-diol. Catalyzes juvenile hormone hydrolysis. Degrades juvenile hormone III (JH III) about 3 times and 5 times slower than juvenile hormone I (JH I) and II (JH II), respectively. Degrades cis-stilbene oxide and trans-stilbene oxide about 18 and 43 times slower than JH III, respectively. The protein is Juvenile hormone epoxide hydrolase of Bombyx mori (Silk moth).